Consider the following 1442-residue polypeptide: Sulfite reductase [NADPH] subunit beta (1442 aa).

Residues 682-831 enclose the Flavodoxin-like domain; the sequence is LHVYYASDGG…AYSEWEPKLW (150 aa). Ser-903 carries the post-translational modification Phosphoserine. [4Fe-4S] cluster is bound by residues Cys-1300, Cys-1306, Cys-1345, and Cys-1349. Residue Cys-1349 participates in siroheme binding.

Belongs to the nitrite and sulfite reductase 4Fe-4S domain family. In terms of assembly, alpha(2)-beta(2). The alpha component is a flavoprotein, the beta component is a hemoprotein. The cofactor is siroheme. [4Fe-4S] cluster serves as cofactor.

Its subcellular location is the cytoplasm. The enzyme catalyses hydrogen sulfide + 3 NADP(+) + 3 H2O = sulfite + 3 NADPH + 4 H(+). It functions in the pathway sulfur metabolism; hydrogen sulfide biosynthesis; hydrogen sulfide from sulfite (NADPH route): step 1/1. Functionally, catalyzes the reduction of sulfite to sulfide, one of several activities required for the biosynthesis of L-cysteine from sulfate. The polypeptide is Sulfite reductase [NADPH] subunit beta (MET5) (Saccharomyces cerevisiae (strain ATCC 204508 / S288c) (Baker's yeast)).